We begin with the raw amino-acid sequence, 435 residues long: IAA-amino acid hydrolase ILR1-like 5 (435 aa).

An N-terminal signal peptide occupies residues 1–25 (MSFCKLVSFVLILHLLNSCLISCSS). Positions 134, 136, 170, 194, and 397 each coordinate Mn(2+). The Prevents secretion from ER motif lies at 432–435 (KDEL).

Belongs to the peptidase M20 family.

The protein resides in the endoplasmic reticulum lumen. Hydrolyzes certain amino acid conjugates of the plant growth regulator indole-3-acetic acid (IAA). This is IAA-amino acid hydrolase ILR1-like 5 from Arabidopsis thaliana (Mouse-ear cress).